A 235-amino-acid polypeptide reads, in one-letter code: Elongation factor Tu, chloroplastic (235 aa).

The tr-type G domain occupies 1–125 (KNMITGAAQM…AVDSYIPTPE (125 aa)). 47-50 (NKED) contributes to the GTP binding site.

The protein belongs to the TRAFAC class translation factor GTPase superfamily. Classic translation factor GTPase family. EF-Tu/EF-1A subfamily.

Its subcellular location is the plastid. It localises to the chloroplast. It carries out the reaction GTP + H2O = GDP + phosphate + H(+). GTP hydrolase that promotes the GTP-dependent binding of aminoacyl-tRNA to the A-site of ribosomes during protein biosynthesis. The chain is Elongation factor Tu, chloroplastic (tufA) from Mantoniella squamata (Unicellular alga).